The primary structure comprises 265 residues: uncharacterized protein (265 aa).

S223 is modified (phosphoserine).

This is an uncharacterized protein from Saccharomyces cerevisiae (strain ATCC 204508 / S288c) (Baker's yeast).